We begin with the raw amino-acid sequence, 144 residues long: Cytochrome c-type biogenesis protein CcmE (144 aa).

The Cytoplasmic portion of the chain corresponds to 1–7; it reads MTRKQKR. A helical; Signal-anchor for type II membrane protein transmembrane segment spans residues 8–28; sequence LAVIGSGMGFLALAAALTFYA. Over 29–144 the chain is Periplasmic; the sequence is LGQQTSYFYM…LKKDGLWQEQ (116 aa). Residues histidine 122 and tyrosine 126 each contribute to the heme site.

Belongs to the CcmE/CycJ family.

It is found in the cell inner membrane. Heme chaperone required for the biogenesis of c-type cytochromes. Transiently binds heme delivered by CcmC and transfers the heme to apo-cytochromes in a process facilitated by CcmF and CcmH. In Chelativorans sp. (strain BNC1), this protein is Cytochrome c-type biogenesis protein CcmE.